Here is a 584-residue protein sequence, read N- to C-terminus: Transcriptional regulator STP2 (584 aa).

Composition is skewed to polar residues over residues 1–11 (MSVAITSNNNK) and 180–202 (AESNESNESLAKDSSTTPASISD). Disordered stretches follow at residues 1–22 (MSVAITSNNNKQPQPQPQPHLK) and 161–214 (KMHP…STVS). Over residues 203 to 214 (SPSHSETESTVS) the composition is skewed to low complexity. The C2H2-type zinc-finger motif lies at 225–247 (FKCPSCDAEFRVRGYLTRHMKKH). 2 disordered regions span residues 381 to 496 (RQKK…PQQP) and 553 to 584 (QYQPGQQQQQQQQQQQQQQQRQHQQQQPSMYF). A compositionally biased stretch (low complexity) spans 394–407 (SESSIQSQESESSI). Over residues 431-441 (QHQHQHHHHVQ) the composition is skewed to basic residues. Low complexity predominate over residues 442–480 (NQHQQHVNQQQSIATPASIYSSSASSTSSYESTHSPYTP). A compositionally biased stretch (polar residues) spans 481–496 (QSSRSPLSHMYNPQQP).

Proteolytically cleaved: activated by the amino acid-induced proteolytic removal of an N-terminal inhibitory domain.

It is found in the cell membrane. It localises to the nucleus. Transcription factor involved in the regulation of gene expression in response to extracellular amino acid levels. Synthesized as latent cytoplasmic precursor, which, upon a signal initiated by the plasma membrane SPS amino acid sensor system (including CSY1 and CSH3), becomes proteolytically activated and relocates to the nucleus, where it induces the expression of SPS-sensor-regulated genes. Required for efficient alkalinization through the release of ammonia from the cells produced during the breakdown of amino acids, and subsequent switch to the hyphal form. This is Transcriptional regulator STP2 (STP2) from Candida albicans (strain SC5314 / ATCC MYA-2876) (Yeast).